We begin with the raw amino-acid sequence, 200 residues long: Neutrophil gelatinase-associated lipocalin (200 aa).

Positions M1–A20 are cleaved as a signal peptide. Position 21 is a pyrrolidone carboxylic acid (Q21). Y72–T74 serves as a coordination point for a carboxymycobactin. N-linked (GlcNAc...) asparagine glycans are attached at residues N81 and N85. C98 and C197 are joined by a disulfide. Y128 provides a ligand contact to enterobactin. A carboxymycobactin is bound by residues K147, K156, and Y160. K156 contributes to the enterobactin binding site.

Belongs to the calycin superfamily. Lipocalin family. In terms of assembly, monomer. Homodimer; disulfide-linked. Heterodimer; disulfide-linked with MMP9. Post-translationally, N-glycosylated. As to expression, expressed in the cortical tubules of the kidney (at protein level). Also expressed in the medullary tubules of the kidney. Detected in lung, spleen, uterus, vagina and epididymis.

It is found in the secreted. It localises to the cytoplasmic granule lumen. Its subcellular location is the cytoplasmic vesicle lumen. Its function is as follows. Iron-trafficking protein involved in multiple processes such as apoptosis, innate immunity and renal development. Binds iron through association with 2,3-dihydroxybenzoic acid (2,3-DHBA), a siderophore that shares structural similarities with bacterial enterobactin, and delivers or removes iron from the cell, depending on the context. Iron-bound form (holo-24p3) is internalized following binding to the SLC22A17 (24p3R) receptor, leading to release of iron and subsequent increase of intracellular iron concentration. In contrast, association of the iron-free form (apo-24p3) with the SLC22A17 (24p3R) receptor is followed by association with an intracellular siderophore, iron chelation and iron transfer to the extracellular medium, thereby reducing intracellular iron concentration. Involved in apoptosis due to interleukin-3 (IL3) deprivation: iron-loaded form increases intracellular iron concentration without promoting apoptosis, while iron-free form decreases intracellular iron levels, inducing expression of the proapoptotic protein BCL2L11/BIM, resulting in apoptosis. Involved in innate immunity; limits bacterial proliferation by sequestering iron bound to microbial siderophores, such as enterobactin. Can also bind siderophores from M.tuberculosis. The sequence is that of Neutrophil gelatinase-associated lipocalin (Lcn2) from Mus musculus (Mouse).